We begin with the raw amino-acid sequence, 506 residues long: Maturase K (506 aa).

Belongs to the intron maturase 2 family. MatK subfamily.

The protein localises to the plastid. It is found in the chloroplast. Usually encoded in the trnK tRNA gene intron. Probably assists in splicing its own and other chloroplast group II introns. The sequence is that of Maturase K from Lathyrus tingitanus (Tangier pea).